The chain runs to 437 residues: Probable indole-3-pyruvate monooxygenase YUCCA3 (437 aa).

41–46 is an FAD binding site; sequence GAGPSG. 212 to 217 contacts NADP(+); it reads GCGNSG.

The protein belongs to the FMO family. Requires FAD as cofactor.

It carries out the reaction indole-3-pyruvate + NADPH + O2 + H(+) = (indol-3-yl)acetate + CO2 + NADP(+) + H2O. It participates in plant hormone metabolism; auxin biosynthesis. Its function is as follows. Involved in auxin biosynthesis. Belongs to the set of redundant YUCCA genes probably responsible for auxin biosynthesis in roots. The protein is Probable indole-3-pyruvate monooxygenase YUCCA3 (YUC3) of Arabidopsis thaliana (Mouse-ear cress).